We begin with the raw amino-acid sequence, 468 residues long: Membrane-associated tyrosine- and threonine-specific cdc2-inhibitory kinase wee-1.1 (468 aa).

Residues S25 to T42 are compositionally biased toward basic and acidic residues. Residues S25–L63 form a disordered region. The span at N49–K61 shows a compositional bias: basic residues. Residues F106–K357 form the Protein kinase domain. Residues L112–V120 and K135 contribute to the ATP site. D224 acts as the Proton acceptor in catalysis. Mg(2+) contacts are provided by N229 and D242. A disordered region spans residues E425 to P453.

The protein belongs to the protein kinase superfamily. Ser/Thr protein kinase family. WEE1 subfamily. In the 12-13-cell embryo, expressed in the E blastomere. In the 16-cell embryo, expressed in the eight AB cells.

Its subcellular location is the nucleus. The enzyme catalyses L-seryl-[protein] + ATP = O-phospho-L-seryl-[protein] + ADP + H(+). It catalyses the reaction L-threonyl-[protein] + ATP = O-phospho-L-threonyl-[protein] + ADP + H(+). Acts as a negative regulator of entry into mitosis (G2 to M transition) by phosphorylation of the CDK1 kinase. The protein is Membrane-associated tyrosine- and threonine-specific cdc2-inhibitory kinase wee-1.1 (wee-1.1) of Caenorhabditis elegans.